Here is a 223-residue protein sequence, read N- to C-terminus: Ribosome maturation factor RimM (223 aa).

The span at 1–12 shows a compositional bias: low complexity; that stretch reads MARRPGSSSRGP. Disordered stretches follow at residues 1–44 and 204–223; these read MARR…DPGL and ADPP…DDPG. In terms of domain architecture, PRC barrel spans 136-210; sequence EDEFFLTDLI…KVVADPPDDL (75 aa).

This sequence belongs to the RimM family. As to quaternary structure, binds ribosomal protein uS19.

It localises to the cytoplasm. An accessory protein needed during the final step in the assembly of 30S ribosomal subunit, possibly for assembly of the head region. Essential for efficient processing of 16S rRNA. May be needed both before and after RbfA during the maturation of 16S rRNA. It has affinity for free ribosomal 30S subunits but not for 70S ribosomes. This Methylorubrum extorquens (strain PA1) (Methylobacterium extorquens) protein is Ribosome maturation factor RimM.